Here is a 355-residue protein sequence, read N- to C-terminus: DNA-directed RNA polymerase subunit alpha (355 aa).

Residues 1–233 (MVREKVRVST…DLFIPFLHKE (233 aa)) form an alpha N-terminal domain (alpha-NTD) region. An alpha C-terminal domain (alpha-CTD) region spans residues 268-355 (KKKIALKSIF…EIYCYSIFFH (88 aa)).

The protein belongs to the RNA polymerase alpha chain family. As to quaternary structure, in plastids the minimal PEP RNA polymerase catalytic core is composed of four subunits: alpha, beta, beta', and beta''. When a (nuclear-encoded) sigma factor is associated with the core the holoenzyme is formed, which can initiate transcription.

It localises to the plastid. Its subcellular location is the chloroplast. The catalysed reaction is RNA(n) + a ribonucleoside 5'-triphosphate = RNA(n+1) + diphosphate. Its function is as follows. DNA-dependent RNA polymerase catalyzes the transcription of DNA into RNA using the four ribonucleoside triphosphates as substrates. This is DNA-directed RNA polymerase subunit alpha from Jasminum nudiflorum (Winter jasmine).